A 234-amino-acid chain; its full sequence is Enterobactin synthase component D (234 aa).

Positions 107, 109, and 152 each coordinate Mg(2+).

It belongs to the P-Pant transferase superfamily. EntD family. In terms of assembly, entB, EntD, EntE, and EntF form a multienzyme complex called enterobactin synthase. Requires Mg(2+) as cofactor.

The protein localises to the membrane. The catalysed reaction is apo-[aryl-carrier protein] + CoA = holo-[aryl-carrier protein] + adenosine 3',5'-bisphosphate + H(+). The enzyme catalyses apo-[peptidyl-carrier protein] + CoA = holo-[peptidyl-carrier protein] + adenosine 3',5'-bisphosphate + H(+). It participates in siderophore biosynthesis; enterobactin biosynthesis. Functionally, involved in the biosynthesis of the siderophore enterobactin (enterochelin), which is a macrocyclic trimeric lactone of N-(2,3-dihydroxybenzoyl)-serine. The serine trilactone serves as a scaffolding for the three catechol functionalities that provide hexadentate coordination for the tightly ligated iron(2+) atoms. Plays an essential role in the assembly of the enterobactin by catalyzing the transfer of the 4'-phosphopantetheine (Ppant) moiety from coenzyme A to the apo-domains of both EntB (ArCP domain) and EntF (PCP domain) to yield their holo-forms which make them competent for the activation of 2,3-dihydroxybenzoate (DHB) and L-serine, respectively. The protein is Enterobactin synthase component D of Salmonella typhi.